Here is a 463-residue protein sequence, read N- to C-terminus: Ribosomal protein uS12 methylthiotransferase RimO (463 aa).

The region spanning 15-130 (PKVGMVSLGC…VMQVVHSHLP (116 aa)) is the MTTase N-terminal domain. Residues Cys-24, Cys-60, Cys-89, Cys-161, Cys-165, and Cys-168 each coordinate [4Fe-4S] cluster. The Radical SAM core domain occupies 147–392 (LTPRHYAYLK…MEVAEEVSAA (246 aa)). In terms of domain architecture, TRAM spans 395-463 (ERKVGKTLKV…ADGHDLWGEV (69 aa)).

This sequence belongs to the methylthiotransferase family. RimO subfamily. The cofactor is [4Fe-4S] cluster.

The protein localises to the cytoplasm. It carries out the reaction L-aspartate(89)-[ribosomal protein uS12]-hydrogen + (sulfur carrier)-SH + AH2 + 2 S-adenosyl-L-methionine = 3-methylsulfanyl-L-aspartate(89)-[ribosomal protein uS12]-hydrogen + (sulfur carrier)-H + 5'-deoxyadenosine + L-methionine + A + S-adenosyl-L-homocysteine + 2 H(+). Functionally, catalyzes the methylthiolation of an aspartic acid residue of ribosomal protein uS12. This Burkholderia thailandensis (strain ATCC 700388 / DSM 13276 / CCUG 48851 / CIP 106301 / E264) protein is Ribosomal protein uS12 methylthiotransferase RimO.